A 65-amino-acid chain; its full sequence is DNA gyrase inhibitor YacG (65 aa).

Residues Cys-8, Cys-11, Cys-27, and Cys-31 each coordinate Zn(2+). Positions 43 to 65 (SYRIPDTGKDSEKQENDPSGSEK) are disordered. Over residues 48 to 65 (DTGKDSEKQENDPSGSEK) the composition is skewed to basic and acidic residues.

Belongs to the DNA gyrase inhibitor YacG family. In terms of assembly, interacts with GyrB. Zn(2+) serves as cofactor.

Inhibits all the catalytic activities of DNA gyrase by preventing its interaction with DNA. Acts by binding directly to the C-terminal domain of GyrB, which probably disrupts DNA binding by the gyrase. The sequence is that of DNA gyrase inhibitor YacG from Nitrosospira multiformis (strain ATCC 25196 / NCIMB 11849 / C 71).